We begin with the raw amino-acid sequence, 210 residues long: Uracil phosphoribosyltransferase (210 aa).

5-phospho-alpha-D-ribose 1-diphosphate contacts are provided by residues R78, R103, and 130–138 (DPMLATGGT). Residues I193 and 198 to 200 (GDA) contribute to the uracil site. D199 is a binding site for 5-phospho-alpha-D-ribose 1-diphosphate.

It belongs to the UPRTase family. The cofactor is Mg(2+).

The enzyme catalyses UMP + diphosphate = 5-phospho-alpha-D-ribose 1-diphosphate + uracil. Its pathway is pyrimidine metabolism; UMP biosynthesis via salvage pathway; UMP from uracil: step 1/1. Its activity is regulated as follows. Allosterically activated by GTP. Functionally, catalyzes the conversion of uracil and 5-phospho-alpha-D-ribose 1-diphosphate (PRPP) to UMP and diphosphate. This Xanthomonas euvesicatoria pv. vesicatoria (strain 85-10) (Xanthomonas campestris pv. vesicatoria) protein is Uracil phosphoribosyltransferase.